We begin with the raw amino-acid sequence, 878 residues long: DNA gyrase subunit A (878 aa).

The Topo IIA-type catalytic domain occupies 34-533 (LPDVRDGLKP…NSADINIEDL (500 aa)). The active-site O-(5'-phospho-DNA)-tyrosine intermediate is the Tyr122. The short motif at 560–566 (QRRGGKG) is the GyrA-box element. Residues 844-878 (DDEELDAIDGSVAEGDEDIAPEAESDDDVADDADE) form a disordered region. The segment covering 857–878 (EGDEDIAPEAESDDDVADDADE) has biased composition (acidic residues).

The protein belongs to the type II topoisomerase GyrA/ParC subunit family. Heterotetramer, composed of two GyrA and two GyrB chains. In the heterotetramer, GyrA contains the active site tyrosine that forms a transient covalent intermediate with DNA, while GyrB binds cofactors and catalyzes ATP hydrolysis.

It is found in the cytoplasm. It catalyses the reaction ATP-dependent breakage, passage and rejoining of double-stranded DNA.. Functionally, a type II topoisomerase that negatively supercoils closed circular double-stranded (ds) DNA in an ATP-dependent manner to modulate DNA topology and maintain chromosomes in an underwound state, and also catalyzes the interconversion of other topological isomers of double-stranded DNA rings, including catenanes and knotted rings. Replenishes negative supercoiling downstream of highly transcribed genes to help control overall chromosomal supercoiling density. E.coli makes 15% more negative supercoils in pBR322 plasmid DNA than S.typhimurium; the S.typhimurium GyrB subunit is toxic in E.coli, while the E.coli copy can be expressed in S.typhimurium even though the 2 subunits have 777/804 residues identical. Negative supercoiling favors strand separation, and DNA replication, transcription, recombination and repair, all of which involve strand separation. Type II topoisomerases break and join 2 DNA strands simultaneously in an ATP-dependent manner. This is DNA gyrase subunit A from Salmonella typhimurium (strain LT2 / SGSC1412 / ATCC 700720).